A 60-amino-acid polypeptide reads, in one-letter code: Large ribosomal subunit protein bL32 (60 aa).

The disordered stretch occupies residues 1 to 21; sequence MAVPRNRHSNARKNIRRSHDA.

It belongs to the bacterial ribosomal protein bL32 family.

This is Large ribosomal subunit protein bL32 from Chlamydia felis (strain Fe/C-56) (Chlamydophila felis).